The following is a 223-amino-acid chain: MASKLLRAVILGPPGSGKGTVCQRIAQNFGLQHLSSGHFLRENIKANTEVGEMAKQYIEKSLLVPDHVITRLMMSELENRRGQHWLLDGFPRTLGQAEALDKICEVDLVISLNIPFETLKDRLSRRWIHPPSGRVYNLDFNPPHVHGIDDVTGEPLVQQEDDKPEAVAARLRQYKDVAKPVIELYKSRGVLHQFSGTETNKIWPYVYTLFSNKITPIQSKEAY.

15–20 (GSGKGT) is an a ribonucleoside 5'-triphosphate binding site. The interval 35-64 (SSGHFLRENIKANTEVGEMAKQYIEKSLLV) is NMP. The AMP site is built by Ser36 and Arg41. At Lys60 the chain carries N6-succinyllysine. AMP contacts are provided by residues 62-64 (LLV), 89-92 (GFPR), and Gln96. The segment at 125-162 (RRWIHPPSGRVYNLDFNPPHVHGIDDVTGEPLVQQEDD) is LID. A ribonucleoside 5'-triphosphate is bound by residues Arg126 and 135–136 (VY). Arg170 is an AMP binding site. An N6-acetyllysine modification is found at Lys175. Residues Lys179 and Lys186 each carry the N6-acetyllysine; alternate modification. N6-succinyllysine; alternate occurs at positions 179 and 186. Residue Thr199 participates in a ribonucleoside 5'-triphosphate binding.

The protein belongs to the adenylate kinase family. AK3 subfamily. Monomer. Interacts with SLC25A5/ANT2.

Its subcellular location is the mitochondrion matrix. It catalyses the reaction a ribonucleoside 5'-phosphate + ATP = a ribonucleoside 5'-diphosphate + ADP. The enzyme catalyses AMP + ATP = 2 ADP. It carries out the reaction GTP + AMP = GDP + ADP. The catalysed reaction is CMP + ATP = CDP + ADP. It catalyses the reaction GTP + CMP = CDP + GDP. The enzyme catalyses dAMP + ATP = dADP + ADP. It carries out the reaction dCMP + ATP = dCDP + ADP. The catalysed reaction is a 2'-deoxyribonucleoside 5'-diphosphate + ATP = a 2'-deoxyribonucleoside 5'-triphosphate + ADP. It catalyses the reaction a ribonucleoside 5'-diphosphate + ATP = a ribonucleoside 5'-triphosphate + ADP. The enzyme catalyses GDP + ATP = GTP + ADP. It carries out the reaction CDP + GTP = CTP + GDP. The catalysed reaction is CDP + ATP = CTP + ADP. It catalyses the reaction UDP + ATP = UTP + ADP. The enzyme catalyses GTP + UDP = UTP + GDP. It carries out the reaction dADP + GTP = dATP + GDP. The catalysed reaction is dCDP + GTP = dCTP + GDP. It catalyses the reaction dCDP + ATP = dCTP + ADP. The enzyme catalyses dGDP + ATP = dGTP + ADP. It carries out the reaction dTDP + GTP = dTTP + GDP. The catalysed reaction is dTDP + ATP = dTTP + ADP. Its function is as follows. Broad-specificity mitochondrial nucleoside phosphate kinase involved in cellular nucleotide homeostasis by catalyzing nucleoside-phosphate interconversions. Similar to other adenylate kinases, preferentially catalyzes the phosphorylation of the nucleoside monophosphate AMP with ATP as phosphate donor to produce ADP. Phosphorylates only AMP when using GTP as phosphate donor. In vitro, can also catalyze the phosphorylation of CMP, dAMP and dCMP and use GTP as an alternate phosphate donor. Moreover, exhibits a diphosphate kinase activity, producing ATP, CTP, GTP, UTP, TTP, dATP, dCTP and dGTP from the corresponding diphosphate substrates with either ATP or GTP as phosphate donors. Plays a role in controlling cellular ATP levels by regulating phosphorylation and activation of the energy sensor protein kinase AMPK. Plays a protective role in the cellular response to oxidative stress. The sequence is that of Adenylate kinase 4, mitochondrial from Pongo abelii (Sumatran orangutan).